A 300-amino-acid chain; its full sequence is Putative zinc finger protein 705EP (300 aa).

The KRAB domain occupies 7 to 78; the sequence is VTFEDVAIDF…GREFLQDQNP (72 aa). The segment at 172 to 194 adopts a C2H2-type 1; degenerate zinc-finger fold; that stretch reads YQCNLCEKAYTNCFHLRRPKMTH. 2 consecutive C2H2-type zinc fingers follow at residues 200–222 and 228–250; these read YTCHLCRKAFTQCSHLRRHEKTH and YKCHQCGKAFIQSFNLRRHERTH. A C2H2-type 4; degenerate zinc finger spans residues 256–278; the sequence is YECDNSGKAFSQSSGFRGNKIIH.

This sequence belongs to the krueppel C2H2-type zinc-finger protein family.

It localises to the nucleus. Its function is as follows. May be involved in transcriptional regulation. In Homo sapiens (Human), this protein is Putative zinc finger protein 705EP.